The primary structure comprises 428 residues: Dihydroorotase (428 aa).

Residues His59 and His61 each contribute to the Zn(2+) site. Substrate is bound by residues 61 to 63 and Asn93; that span reads HLR. Positions 151, 178, and 231 each coordinate Zn(2+). A substrate-binding site is contributed by Asn277. Position 304 (Asp304) interacts with Zn(2+). Asp304 is a catalytic residue. Substrate is bound by residues His308 and 322 to 323; that span reads FG.

It belongs to the metallo-dependent hydrolases superfamily. DHOase family. Class I DHOase subfamily. Zn(2+) is required as a cofactor.

It catalyses the reaction (S)-dihydroorotate + H2O = N-carbamoyl-L-aspartate + H(+). It functions in the pathway pyrimidine metabolism; UMP biosynthesis via de novo pathway; (S)-dihydroorotate from bicarbonate: step 3/3. Its function is as follows. Catalyzes the reversible cyclization of carbamoyl aspartate to dihydroorotate. The protein is Dihydroorotase of Halalkalibacterium halodurans (strain ATCC BAA-125 / DSM 18197 / FERM 7344 / JCM 9153 / C-125) (Bacillus halodurans).